Reading from the N-terminus, the 291-residue chain is Small ribosomal subunit protein uS2 (291 aa).

Acidic residues predominate over residues 238–247 (DEESGDELDE). The interval 238-291 (DEESGDELDESVSLHEEGREITDYENYTPPEEREYSVNDEGDVFDEDESLYEGR) is disordered. A compositionally biased stretch (basic and acidic residues) spans 249–259 (VSLHEEGREIT). Positions 274–291 (VNDEGDVFDEDESLYEGR) are enriched in acidic residues.

It belongs to the universal ribosomal protein uS2 family.

The protein is Small ribosomal subunit protein uS2 (rpsB) of Treponema pallidum (strain Nichols).